Consider the following 876-residue polypeptide: Alanine--tRNA ligase (876 aa).

Positions 2–461 (SKSTAEIRQA…VDSASEFKGY (460 aa)) are catalytic. Lys74 carries the post-translational modification N6-acetyllysine. Positions 553-705 (DEARRARIRL…EAVTGEGAIA (153 aa)) are editing. 4 residues coordinate Zn(2+): His564, His568, Cys666, and His670. Residues 699-808 (TGEGAIATVH…STIIVLATVV (110 aa)) are important for oligomerization. Residues 766-875 (IDVNGVKLLV…SVKGWVSAKL (110 aa)) form a C-Ala domain region.

This sequence belongs to the class-II aminoacyl-tRNA synthetase family. Homotetramer. The cofactor is Zn(2+).

Its subcellular location is the cytoplasm. It catalyses the reaction tRNA(Ala) + L-alanine + ATP = L-alanyl-tRNA(Ala) + AMP + diphosphate. The catalysed reaction is (S)-lactate + ATP + H(+) = (S)-lactoyl-AMP + diphosphate. It carries out the reaction (S)-lactoyl-AMP + L-lysyl-[protein] = N(6)-[(S)-lactoyl]-L-lysyl-[protein] + AMP + 2 H(+). Acetylation at Lys-74 decreases the alanylation activity for tRNA(Ala); a protein that is fully acetylated is inactive in vitro. Catalyzes the attachment of L-alanine to tRNA(Ala) in a two-step reaction: L-alanine is first activated by ATP to form Ala-AMP and then transferred to the acceptor end of tRNA(Ala). AlaRS also incorrectly activates the sterically smaller amino acid glycine as well as the sterically larger amino acid L-serine; generates 2-fold more mischarged Gly than Ser. These mischarged amino acids occur because the of inherent physicochemical limitations on discrimination between closely related amino acids (Ala, Gly and Ser) in the charging step. In presence of high levels of lactate, also acts as a protein lactyltransferase that mediates lactylation of lysine residues in target proteins. In terms of biological role, edits mischarged Ser-tRNA(Ala) and Gly-tRNA(Ala) but not incorrectly charged Ser-tRNA(Thr). Dtd edits Gly-tRNA(Ala) 4-fold better than does AlaRS. Functionally, attaches Ala to transfer-messenger RNA (tmRNA, also known as 10Sa RNA, the product of the ssrA gene). tmRNA plays a major role in rescue of stalled ribosomes via trans-translation. The chain is Alanine--tRNA ligase (alaS) from Escherichia coli (strain K12).